The chain runs to 156 residues: Calglandulin (156 aa).

EF-hand domains lie at 8–43 (EQITEYKGIFEMFDEEGNGLVKTDDLESLMSLIGIN), 44–79 (PTKRDLANMAKDVDKDKKGTFNCEGFLVLMGIYHEK), 82–117 (NQDEELRAAFKVFDKEHKGYIEWDTLKYVLMNAGEP), and 118–153 (LNEHEAELMMKEADKDGDGTIDYEEFVAMMTGESFK). The Ca(2+) site is built by aspartate 131, aspartate 133, aspartate 135, threonine 137, and glutamate 142.

It belongs to the calmodulin family. Calglandulin subfamily. In terms of tissue distribution, expressed by the venom gland.

Its subcellular location is the cytoplasm. Functionally, may be involved in the cellular control mechanism of the secretion of toxins from the gland into the venom. This is Calglandulin from Tropidechis carinatus (Australian rough-scaled snake).